Reading from the N-terminus, the 503-residue chain is Anthranilate synthase component 1 3 (503 aa).

269-271 (PYS) serves as a coordination point for L-tryptophan. 304–305 (GT) provides a ligand contact to chorismate. E331 contributes to the Mg(2+) binding site. Chorismate contacts are provided by residues Y419, R439, 453-455 (GSG), and G455. E468 serves as a coordination point for Mg(2+).

The protein belongs to the anthranilate synthase component I family. As to quaternary structure, tetramer of two components I and two components II. It depends on Mg(2+) as a cofactor.

It carries out the reaction chorismate + L-glutamine = anthranilate + pyruvate + L-glutamate + H(+). It participates in amino-acid biosynthesis; L-tryptophan biosynthesis; L-tryptophan from chorismate: step 1/5. The sequence is that of Anthranilate synthase component 1 3 (trpE3) from Haloarcula marismortui (strain ATCC 43049 / DSM 3752 / JCM 8966 / VKM B-1809) (Halobacterium marismortui).